The following is an 84-amino-acid chain: Small ribosomal subunit protein uS17 (84 aa).

It belongs to the universal ribosomal protein uS17 family. Part of the 30S ribosomal subunit.

One of the primary rRNA binding proteins, it binds specifically to the 5'-end of 16S ribosomal RNA. The polypeptide is Small ribosomal subunit protein uS17 (Clostridium botulinum (strain ATCC 19397 / Type A)).